The following is a 451-amino-acid chain: Phenylalanine--tRNA ligase, mitochondrial (451 aa).

Substrate contacts are provided by residues 157–160, Arg-179, 186–188, and 193–195; these read SAHQ, QHY, and QLE. The residue at position 202 (Lys-202) is an N6-acetyllysine. The substrate site is built by Glu-287 and Phe-312. The FDX-ACB domain maps to 358-450; that stretch reads SKYPAVINDI…AVQLLGVEGR (93 aa).

This sequence belongs to the class-II aminoacyl-tRNA synthetase family. In terms of assembly, monomer.

The protein localises to the mitochondrion matrix. It is found in the mitochondrion. It catalyses the reaction tRNA(Phe) + L-phenylalanine + ATP = L-phenylalanyl-tRNA(Phe) + AMP + diphosphate + H(+). In terms of biological role, is responsible for the charging of tRNA(Phe) with phenylalanine in mitochondrial translation. To a lesser extent, also catalyzes direct attachment of m-Tyr (an oxidized version of Phe) to tRNA(Phe), thereby opening the way for delivery of the misacylated tRNA to the ribosome and incorporation of ROS-damaged amino acid into proteins. The chain is Phenylalanine--tRNA ligase, mitochondrial (FARS2) from Homo sapiens (Human).